We begin with the raw amino-acid sequence, 336 residues long: Apyrase (336 aa).

The signal sequence occupies residues 1–21 (MFLKFCVVAFAICLSINLSEG). N209 is a glycosylation site (N-linked (GlcNAc...) asparagine).

Belongs to the apyrase family. Ca(2+) serves as cofactor. As to expression, salivary gland (at protein level).

The protein localises to the secreted. It carries out the reaction a ribonucleoside 5'-triphosphate + 2 H2O = a ribonucleoside 5'-phosphate + 2 phosphate + 2 H(+). Functionally, facilitates hematophagy by inhibiting ADP- and collagen-dependent platelet aggregation in the host. Cleaves adenosine triphosphate (ATP) and adenosine diphosphate (ADP) to adenosine monophosphate (AMP) and inorganic phosphate in calcium-dependent manner. The sequence is that of Apyrase from Phlebotomus duboscqi (Sandfly).